The primary structure comprises 728 residues: Glycine--tRNA ligase (728 aa).

A mitochondrion-targeting transit peptide spans 1 to 32 (MPCLLPTLLRATRAALLLQSPRVVAAPASQRL). Residues 52-108 (LLAPLRLAVRQQGDFVRKLKEDKAPQVDVDRAVAELKARKRVLEAKELALQPKDDIV) enclose the WHEP-TRS domain. An N6-acetyllysine modification is found at Lys-193. Glu-288 contributes to the glycine binding site. Residues 320–322 (RNE) and 331–332 (RV) contribute to the ATP site. Position 339 (Glu-339) interacts with glycine. At Tyr-442 the chain carries Phosphotyrosine. 446–447 (EI) is an ATP binding site. An N6-acetyllysine modification is found at Lys-490. A glycine-binding site is contributed by 565–567 (EPS). Arg-572 is a binding site for ATP. Ser-689 carries the post-translational modification Phosphoserine. At Thr-725 the chain carries Phosphothreonine.

It belongs to the class-II aminoacyl-tRNA synthetase family. In terms of assembly, homodimer.

It localises to the cytoplasm. The protein localises to the mitochondrion. The protein resides in the cell projection. It is found in the axon. Its subcellular location is the secreted. It localises to the extracellular exosome. It catalyses the reaction tRNA(Gly) + glycine + ATP = glycyl-tRNA(Gly) + AMP + diphosphate. The enzyme catalyses 2 ATP + H(+) = P(1),P(4)-bis(5'-adenosyl) tetraphosphate + diphosphate. Catalyzes the ATP-dependent ligation of glycine to the 3'-end of its cognate tRNA, via the formation of an aminoacyl-adenylate intermediate (Gly-AMP). Also produces diadenosine tetraphosphate (Ap4A), a universal pleiotropic signaling molecule needed for cell regulation pathways, by direct condensation of 2 ATPs. Thereby, may play a special role in Ap4A homeostasis. The sequence is that of Glycine--tRNA ligase (Gars1) from Rattus norvegicus (Rat).